We begin with the raw amino-acid sequence, 278 residues long: HTH-type transcriptional activator RhaS (278 aa).

Residues 174–272 form the HTH araC/xylS-type domain; that stretch reads NQLMAWLEDH…NWSPRDIRQG (99 aa). 2 consecutive DNA-binding regions (H-T-H motif) follow at residues 191-212 and 239-262; these read EAVA…KQHT and VTEI…RREF.

In terms of assembly, binds DNA as a dimer.

It localises to the cytoplasm. Functionally, activates expression of the rhaBAD and rhaT operons. This Salmonella dublin (strain CT_02021853) protein is HTH-type transcriptional activator RhaS.